A 450-amino-acid polypeptide reads, in one-letter code: UDP-N-acetylmuramoylalanine--D-glutamate ligase (450 aa).

Residue 119-125 coordinates ATP; sequence GSNGKTT.

Belongs to the MurCDEF family.

It localises to the cytoplasm. The catalysed reaction is UDP-N-acetyl-alpha-D-muramoyl-L-alanine + D-glutamate + ATP = UDP-N-acetyl-alpha-D-muramoyl-L-alanyl-D-glutamate + ADP + phosphate + H(+). Its pathway is cell wall biogenesis; peptidoglycan biosynthesis. Functionally, cell wall formation. Catalyzes the addition of glutamate to the nucleotide precursor UDP-N-acetylmuramoyl-L-alanine (UMA). This is UDP-N-acetylmuramoylalanine--D-glutamate ligase from Bacillus cereus (strain ATCC 14579 / DSM 31 / CCUG 7414 / JCM 2152 / NBRC 15305 / NCIMB 9373 / NCTC 2599 / NRRL B-3711).